We begin with the raw amino-acid sequence, 216 residues long: Large ribosomal subunit protein uL3 (216 aa).

At Gln-157 the chain carries N5-methylglutamine.

It belongs to the universal ribosomal protein uL3 family. Part of the 50S ribosomal subunit. Forms a cluster with proteins L14 and L19. Post-translationally, methylated by PrmB.

In terms of biological role, one of the primary rRNA binding proteins, it binds directly near the 3'-end of the 23S rRNA, where it nucleates assembly of the 50S subunit. The chain is Large ribosomal subunit protein uL3 from Stenotrophomonas maltophilia (strain R551-3).